A 157-amino-acid polypeptide reads, in one-letter code: Myosin regulatory light chain, striated adductor muscle (157 aa).

EF-hand domains lie at 16-51 and 85-120; these read KQIQEMKEAFSMIDVDRDGFVSKEDIKAISEQLGRA and DSEETIRNAFAMFDEQETKKLNIEYIKDLLENMGDN. D29, D31, D33, and D40 together coordinate Ca(2+).

In molluscan muscle, calcium regulation is associated with myosin rather than with actin. Muscle myosin contains two types of light chains: the catalytic light chain, essential for ATPase activity, and the regulatory light chain, a calcium-binding protein responsible for Ca(2+) dependent binding and Ca(2+) dependent Mg-ATPase activity. In Argopecten irradians (Bay scallop), this protein is Myosin regulatory light chain, striated adductor muscle.